A 238-amino-acid polypeptide reads, in one-letter code: Phosphoribosylaminoimidazole-succinocarboxamide synthase (238 aa).

It belongs to the SAICAR synthetase family.

The catalysed reaction is 5-amino-1-(5-phospho-D-ribosyl)imidazole-4-carboxylate + L-aspartate + ATP = (2S)-2-[5-amino-1-(5-phospho-beta-D-ribosyl)imidazole-4-carboxamido]succinate + ADP + phosphate + 2 H(+). The protein operates within purine metabolism; IMP biosynthesis via de novo pathway; 5-amino-1-(5-phospho-D-ribosyl)imidazole-4-carboxamide from 5-amino-1-(5-phospho-D-ribosyl)imidazole-4-carboxylate: step 1/2. This chain is Phosphoribosylaminoimidazole-succinocarboxamide synthase, found in Desulfitobacterium hafniense (strain DSM 10664 / DCB-2).